Reading from the N-terminus, the 333-residue chain is Flap endonuclease 1 (333 aa).

The segment at 1–99 is N-domain; it reads MGVALREVLT…ETIESRREVR (99 aa). Residues aspartate 28, aspartate 81, glutamate 153, glutamate 155, aspartate 174, aspartate 176, and aspartate 235 each coordinate Mg(2+). The tract at residues 117–256 is I-domain; it reads EAYKQARASS…TALKIVKKDG (140 aa). The interaction with PCNA stretch occupies residues 325-333; it reads GQKTLDRWF.

Belongs to the XPG/RAD2 endonuclease family. FEN1 subfamily. Interacts with PCNA. PCNA stimulates the nuclease activity without altering cleavage specificity. The cofactor is Mg(2+).

Functionally, structure-specific nuclease with 5'-flap endonuclease and 5'-3' exonuclease activities involved in DNA replication and repair. During DNA replication, cleaves the 5'-overhanging flap structure that is generated by displacement synthesis when DNA polymerase encounters the 5'-end of a downstream Okazaki fragment. Binds the unpaired 3'-DNA end and kinks the DNA to facilitate 5' cleavage specificity. Cleaves one nucleotide into the double-stranded DNA from the junction in flap DNA, leaving a nick for ligation. Also involved in the base excision repair (BER) pathway. Acts as a genome stabilization factor that prevents flaps from equilibrating into structures that lead to duplications and deletions. Also possesses 5'-3' exonuclease activity on nicked or gapped double-stranded DNA. The sequence is that of Flap endonuclease 1 from Methanosphaerula palustris (strain ATCC BAA-1556 / DSM 19958 / E1-9c).